A 436-amino-acid polypeptide reads, in one-letter code: Chaperone protein dnaJ 16 (436 aa).

The J domain maps to 20–85 (DPYEVLGVLR…EKRRQFDSAG (66 aa)). Residues 291–348 (TQEKEDLRSVEAQILTKRAELAKFETEYREVLVQFTDMTSRYAQEMQSIDELLKQRNE) adopt a coiled-coil conformation. Residues 360 to 416 (KRSSSKNRMRKSSFKKAAAKAPAPTEQEEEEEEEEEEEEESSRQKNKKPSTCDKSET) form a disordered region. The segment covering 362 to 377 (SSSKNRMRKSSFKKAA) has biased composition (basic residues). Over residues 385 to 399 (EQEEEEEEEEEEEEE) the composition is skewed to acidic residues.

The protein belongs to the DnaJ family. B/II subfamily. In terms of tissue distribution, expressed constitutively in seedlings, roots, leaves, stems, flowers and siliques.

The protein localises to the membrane. Functionally, plays a continuous role in plant development probably in the structural organization of compartments. Seems to not be involved in gravitropism signaling pathway. This Arabidopsis thaliana (Mouse-ear cress) protein is Chaperone protein dnaJ 16 (ATJ16).